Reading from the N-terminus, the 303-residue chain is Paired immunoglobulin-like type 2 receptor alpha (303 aa).

Residues 1 to 19 (MGRPLLLPLLPLLLPPAFL) form the signal peptide. At 20-197 (QPSGSTGSGP…DSWHISLETA (178 aa)) the chain is on the extracellular side. The region spanning 32–150 (LYGVTQPKHL…SIEGTKLSIT (119 aa)) is the Ig-like V-type domain. Asparagine 100 is a glycosylation site (N-linked (GlcNAc...) asparagine). The chain crosses the membrane as a helical span at residues 198-218 (VGVAVAVTVLGIMILGLICLL). The Cytoplasmic portion of the chain corresponds to 219-303 (RWRRRKGQQR…NETLYSVLKA (85 aa)). The tract at residues 226–296 (QQRTKATTPA…RPLKSPQNET (71 aa)) is disordered. 2 consecutive short sequence motifs (ITIM motif) follow at residues 267–272 (IVYASL) and 296–301 (TLYSVL).

As to quaternary structure, monomer. Interacts with PTPN6/SHP-1 and PTPN11/SHP-2 upon tyrosine phosphorylation. (Microbial infection) Interacts with herpes simplex virus 1 glycoprotein B. According to PubMed:10660620, N- and O-glycosylated. According to PubMed:10903717, only N-glycosylated. In terms of processing, phosphorylated on tyrosine residues. As to expression, predominantly detected in hemopoietic tissues and is expressed by monocytes, macrophages, and granulocytes, but not by lymphocytes. Also strongly expressed by dendritic cells (DC); preferentially by CD14+/CD1a- DC derived from CD34+ progenitors. Also expressed by CD11c+ blood and tonsil DC, but not by CD11c- DC precursors.

Its subcellular location is the cell membrane. It is found in the secreted. In terms of biological role, paired receptors consist of highly related activating and inhibitory receptors and are widely involved in the regulation of the immune system. PILRA is thought to act as a cellular signaling inhibitory receptor by recruiting cytoplasmic phosphatases like PTPN6/SHP-1 and PTPN11/SHP-2 via their SH2 domains that block signal transduction through dephosphorylation of signaling molecules. Receptor for PIANP. Functionally, (Microbial infection) Acts as an entry co-receptor for herpes simplex virus 1. The chain is Paired immunoglobulin-like type 2 receptor alpha (PILRA) from Homo sapiens (Human).